Consider the following 663-residue polypeptide: Alcohol oxidase (663 aa).

8 to 39 (DVIVCGGGSTGCVIAGRLANVDENLKVLLIEN) provides a ligand contact to FAD. Catalysis depends on histidine 567, which acts as the Proton acceptor. The Microbody targeting signal motif lies at 661–663 (ARY).

This sequence belongs to the GMC oxidoreductase family. In terms of assembly, homooctamer. The cofactor is FAD.

It is found in the peroxisome matrix. It carries out the reaction a primary alcohol + O2 = an aldehyde + H2O2. Its pathway is energy metabolism; methane degradation. Functionally, catalyzes the oxidation of methanol to formaldehyde and hydrogen peroxide, the first step in the methanol utilization pathway of methylotrophic yeasts. This Candida boidinii (Yeast) protein is Alcohol oxidase (AOD1).